Consider the following 466-residue polypeptide: UDP-N-acetylmuramate--L-alanine ligase (466 aa).

Gly119–Thr125 lines the ATP pocket.

This sequence belongs to the MurCDEF family.

The protein resides in the cytoplasm. The catalysed reaction is UDP-N-acetyl-alpha-D-muramate + L-alanine + ATP = UDP-N-acetyl-alpha-D-muramoyl-L-alanine + ADP + phosphate + H(+). The protein operates within cell wall biogenesis; peptidoglycan biosynthesis. Functionally, cell wall formation. This chain is UDP-N-acetylmuramate--L-alanine ligase, found in Cytophaga hutchinsonii (strain ATCC 33406 / DSM 1761 / CIP 103989 / NBRC 15051 / NCIMB 9469 / D465).